The following is a 341-amino-acid chain: Methionine import ATP-binding protein MetN 1 (341 aa).

Positions I2 to V241 constitute an ABC transporter domain. G38–S45 serves as a coordination point for ATP.

This sequence belongs to the ABC transporter superfamily. Methionine importer (TC 3.A.1.24) family. As to quaternary structure, the complex is composed of two ATP-binding proteins (MetN), two transmembrane proteins (MetI) and a solute-binding protein (MetQ).

The protein resides in the cell membrane. The catalysed reaction is L-methionine(out) + ATP + H2O = L-methionine(in) + ADP + phosphate + H(+). The enzyme catalyses D-methionine(out) + ATP + H2O = D-methionine(in) + ADP + phosphate + H(+). Functionally, part of the ABC transporter complex MetNIQ involved in methionine import. Responsible for energy coupling to the transport system. The chain is Methionine import ATP-binding protein MetN 1 from Staphylococcus aureus (strain Mu50 / ATCC 700699).